Consider the following 796-residue polypeptide: Inactive dipeptidyl peptidase 10 (796 aa).

The Cytoplasmic segment spans residues 1 to 34 (MNQTASVSHHIKCQPSKTIKELGSNSPPQRNWKG). The segment at 1 to 56 (MNQTASVSHHIKCQPSKTIKELGSNSPPQRNWKGIAIALLVILVVCSLITMSVILL) is mediates effects on KCND2. Residues 35–55 (IAIALLVILVVCSLITMSVIL) form a helical; Signal-anchor for type II membrane protein membrane-spanning segment. Residues 56 to 796 (LTPDELTNSS…VLPQEPEEDE (741 aa)) lie on the Extracellular side of the membrane. Residues asparagine 90, asparagine 111, and asparagine 119 are each glycosylated (N-linked (GlcNAc...) asparagine). Phosphotyrosine occurs at positions 138 and 143. Residues asparagine 257, asparagine 342, and asparagine 748 are each glycosylated (N-linked (GlcNAc...) asparagine).

The protein belongs to the peptidase S9B family. DPPIV subfamily. May form oligomers. Interacts with KCND1. Interacts with KCND2. In terms of processing, N-glycosylation is important for cell surface expression, specially at Asn-257, which is crucial. As to expression, found in serum, T-cells and brain (at protein level). Expressed in brain, pancreas, spinal cord and adrenal glands.

Its subcellular location is the cell membrane. In terms of biological role, promotes cell surface expression of the potassium channel KCND2. Modulates the activity and gating characteristics of the potassium channel KCND2. Has no dipeptidyl aminopeptidase activity. The chain is Inactive dipeptidyl peptidase 10 (DPP10) from Homo sapiens (Human).